The chain runs to 514 residues: Maturase K (514 aa).

It belongs to the intron maturase 2 family. MatK subfamily.

The protein localises to the plastid. Its subcellular location is the chloroplast. In terms of biological role, usually encoded in the trnK tRNA gene intron. Probably assists in splicing its own and other chloroplast group II introns. In Lepidozamia peroffskyana (Peroffsky's lepidozamia), this protein is Maturase K.